Reading from the N-terminus, the 406-residue chain is Eukaryotic initiation factor 4A-I (406 aa).

Residues 1 to 21 (MSASQDSRSRDNGPDGMEPEG) are disordered. An N-acetylserine modification is found at Ser-2. Ser-4 is subject to Phosphoserine. Residues 32-60 (DSLDDMNLSESLLRGIYAYGFEKPSAIQQ) carry the Q motif motif. A Helicase ATP-binding domain is found at 63–234 (ILSCIKGYDV…KKFMRDPIRI (172 aa)). 76–83 (AQSGTGKT) is an ATP binding site. N6-acetyllysine is present on Lys-118. A Glycyl lysine isopeptide (Lys-Gly) (interchain with G-Cter in SUMO2) cross-link involves residue Lys-146. Thr-158 is subject to Phosphothreonine. N6-acetyllysine is present on Lys-174. Residues 182–185 (DEAD) carry the DEAD box motif. Lys-193 carries the N6-acetyllysine modification. A Glycyl lysine isopeptide (Lys-Gly) (interchain with G-Cter in SUMO2) cross-link involves residue Lys-225. The residue at position 238 (Lys-238) is an N6-acetyllysine; alternate. Lys-238 participates in a covalent cross-link: Glycyl lysine isopeptide (Lys-Gly) (interchain with G-Cter in SUMO2); alternate. A Helicase C-terminal domain is found at 245–406 (GIRQFYINVE…EMPLNVADLI (162 aa)). Glycyl lysine isopeptide (Lys-Gly) (interchain with G-Cter in SUMO2) cross-links involve residues Lys-309, Lys-369, and Lys-381.

It belongs to the DEAD box helicase family. eIF4A subfamily. In terms of assembly, eIF4F is a multi-subunit complex, the composition of which varies with external and internal environmental conditions. It is composed of at least EIF4A, EIF4E and EIF4G1/EIF4G3. Interacts with PAIP1, EIF4E and UPF2. Found in a complex with XPO7, EIF4A1, ARHGAP1, VPS26A, VPS29, VPS35 and SFN. May interact with NOM1. Interacts with PDCD4; this interferes with the interaction between EIF4A and EIF4G. Interacts with RBM4. Interacts with DDX3X in an RNA-independent manner. Interacts with PKP1 (via N-terminus); the interaction promotes EIF4A1 recruitment to the cap-dependent translation complex and EIF4A1 ATPase activity.

The protein localises to the cytoplasm. Its subcellular location is the perinuclear region. The protein resides in the cell membrane. It localises to the stress granule. The catalysed reaction is ATP + H2O = ADP + phosphate + H(+). Functionally, ATP-dependent RNA helicase which is a subunit of the eIF4F complex involved in cap recognition and is required for mRNA binding to ribosome. In the current model of translation initiation, eIF4A unwinds RNA secondary structures in the 5'-UTR of mRNAs which is necessary to allow efficient binding of the small ribosomal subunit, and subsequent scanning for the initiator codon. As a result, promotes cell proliferation and growth. The protein is Eukaryotic initiation factor 4A-I (EIF4A1) of Pongo abelii (Sumatran orangutan).